The sequence spans 111 residues: uncharacterized protein (111 aa).

The HIT domain occupies 4–111 (IFERIIEGAV…LGGGLLGSIA (108 aa)). The Histidine triad motif motif lies at 96–100 (HLHIH).

This is an uncharacterized protein from Chlamydia trachomatis serovar D (strain ATCC VR-885 / DSM 19411 / UW-3/Cx).